The chain runs to 281 residues: Small ribosomal subunit protein uS2 (281 aa).

Residues 225-281 (LMERKAEKPEEEETEEAAPRRERRARSGARRSRQNENEATAEAATEVAEAPEAEEAE) form a disordered region. Positions 245–256 (RERRARSGARRS) are enriched in basic residues. Residues 262-272 (EATAEAATEVA) show a composition bias toward low complexity.

Belongs to the universal ribosomal protein uS2 family.

The protein is Small ribosomal subunit protein uS2 of Porphyromonas gingivalis (strain ATCC 33277 / DSM 20709 / CIP 103683 / JCM 12257 / NCTC 11834 / 2561).